The sequence spans 638 residues: 1-deoxy-D-xylulose-5-phosphate synthase (638 aa).

Thiamine diphosphate contacts are provided by residues histidine 75 and 116 to 118 (AHS). Position 147 (aspartate 147) interacts with Mg(2+). Thiamine diphosphate is bound by residues 148–149 (GA), asparagine 177, tyrosine 288, and glutamate 370. Asparagine 177 provides a ligand contact to Mg(2+).

This sequence belongs to the transketolase family. DXPS subfamily. Homodimer. The cofactor is Mg(2+). It depends on thiamine diphosphate as a cofactor.

The catalysed reaction is D-glyceraldehyde 3-phosphate + pyruvate + H(+) = 1-deoxy-D-xylulose 5-phosphate + CO2. It functions in the pathway metabolic intermediate biosynthesis; 1-deoxy-D-xylulose 5-phosphate biosynthesis; 1-deoxy-D-xylulose 5-phosphate from D-glyceraldehyde 3-phosphate and pyruvate: step 1/1. Catalyzes the acyloin condensation reaction between C atoms 2 and 3 of pyruvate and glyceraldehyde 3-phosphate to yield 1-deoxy-D-xylulose-5-phosphate (DXP). In Cupriavidus taiwanensis (strain DSM 17343 / BCRC 17206 / CCUG 44338 / CIP 107171 / LMG 19424 / R1) (Ralstonia taiwanensis (strain LMG 19424)), this protein is 1-deoxy-D-xylulose-5-phosphate synthase.